The chain runs to 410 residues: Putative transposase Rv3428c (410 aa).

An Integrase catalytic domain is found at V40 to E220. Residues A390–P410 form a disordered region.

This sequence belongs to the transposase IS21/IS408/IS1162 family.

The chain is Putative transposase Rv3428c from Mycobacterium tuberculosis (strain ATCC 25618 / H37Rv).